A 250-amino-acid polypeptide reads, in one-letter code: MAEQASSFTDRLAARFAGAQIAVALPRGEVTLEVAAADWHATCLALRDELGFEQLSDLCGVDYLGYGSGEWDTADVSSQGFSRGVEGKAVGRFAWGEFPSQESSAGAQPQQLPKQRFAVVAQLISYQHNQRLRVRCYAPDEQVPLVASVTDIWPGVNWFEREAFDLFGIVFDGHPDLRRILTDYGFVGHPFRKDFPLIGNVEVRYDEERKRVVYEPVTSVEPRVGVPRVIRDDARYETAAGEVGRSETAK.

It belongs to the complex I 30 kDa subunit family. As to quaternary structure, NDH-1 is composed of 14 different subunits. Subunits NuoB, C, D, E, F, and G constitute the peripheral sector of the complex.

The protein localises to the cell inner membrane. It catalyses the reaction a quinone + NADH + 5 H(+)(in) = a quinol + NAD(+) + 4 H(+)(out). NDH-1 shuttles electrons from NADH, via FMN and iron-sulfur (Fe-S) centers, to quinones in the respiratory chain. The immediate electron acceptor for the enzyme in this species is believed to be ubiquinone. Couples the redox reaction to proton translocation (for every two electrons transferred, four hydrogen ions are translocated across the cytoplasmic membrane), and thus conserves the redox energy in a proton gradient. In Xanthomonas oryzae pv. oryzae (strain PXO99A), this protein is NADH-quinone oxidoreductase subunit C.